Here is a 336-residue protein sequence, read N- to C-terminus: Potassium channel subfamily K member 1 (336 aa).

The Cytoplasmic portion of the chain corresponds to 1 to 20 (MLQSLAGSSCVRLVERHRSA). The helical transmembrane segment at 21-41 (WCFGFLVLGYLLYLVFGAVVF) threads the bilayer. Residues 42–103 (SSVELPYEDL…SNASGNWNWD (62 aa)) lie on the Extracellular side of the membrane. N-linked (GlcNAc...) asparagine glycosylation occurs at Asn95. Residues 104-116 (FTSALFFASTVLS) constitute an intramembrane region (helical). An intramembrane segment occupies 117–122 (TTGYGH). The tract at residues 117–122 (TTGYGH) is selectivity filter 1. Residues 123 to 132 (TVPLSDGGKA) are Extracellular-facing. A helical transmembrane segment spans residues 133-156 (FCIIYSVIGIPFTLLFLTAVVQRV). Residues 157 to 181 (TVHVTRRPVLYFHIRWGFSKQVVAI) are Cytoplasmic-facing. The chain crosses the membrane as a helical span at residues 182–202 (VHAVLLGFVTVSCFFFIPAAV). At 203–211 (FSVLEDDWN) the chain is on the extracellular side. The segment at residues 212-224 (FLESFYFCFISLS) is an intramembrane region (helical). The interval 225-230 (TIGLGD) is selectivity filter 2. The stretch at 225-231 (TIGLGDY) is an intramembrane region. The Extracellular segment spans residues 232-243 (VPGEGYNQKFRE). The chain crosses the membrane as a helical span at residues 244–267 (LYKIGITCYLLLGLIAMLVVLETF). Topologically, residues 268–336 (CELHELKKFR…PPYEDGSADH (69 aa)) are cytoplasmic. Lys274 is covalently cross-linked (Glycyl lysine isopeptide (Lys-Gly) (interchain with G-Cter in SUMO)). The interval 293-299 (IMEHDQL) is important for intracellular retention in recycling endosomes. Residues 310–336 (GLKEEQKQSEPFVASQSPPYEDGSADH) form a disordered region. Ser326 carries the post-translational modification Phosphoserine.

This sequence belongs to the two pore domain potassium channel (TC 1.A.1.8) family. As to quaternary structure, homodimer; disulfide-linked. Heterodimer with KCNK2; disulfide-linked. In astrocytes, forms mostly heterodimeric potassium channels with KCNK2, with only a minor proportion of functional channels containing homodimeric KCNK1. Interacts with KCNK3 and KCNK9, forming functional heterodimeric channels. Interacts with GNG4. Identified in a complex with PSD and ARF6; interacts only with PSD that is bound to ARF6. Interacts with UBE2I. In terms of processing, sumoylation is controversial. Sumoylated by UBE2I. Not sumoylated when expressed in xenopus oocytes or mammalian cells. Sumoylation inactivates the channel, but does not interfere with expression at the cell membrane. Sumoylation of a single subunit is sufficient to silence the dimeric channel. Sumoylation of KCNK1 is sufficient to silence heterodimeric channels formed by KCNK1 and KCNK3 or KCNK9. Desumoylated by SENP1; this activates the channel. Desumoylated by SENP1; this strongly increases halothane-mediated activation of heterodimeric channels formed with KCNK9. SENP1 treatment has no effect. As to expression, detected in spiral ganglion neurons. Detected in hippocampus CA1 and CA1 regions and in the molecular layer of the dentate gyrus. Detected on hippocampus astrocytes. Highly expressed in the stria vascularis in the cochlea. Detected in pancreas islet beta cells. Detected in kidney, at brush border membranes in proximal tubules and in cytoplasmic structures in distal convoluted tubules, thick ascending limbs and collecting ducts (at protein level). Widely expressed. Detected in spiral ganglion cells. Highest expression in brain, kidney, thyroid, salivary gland, adrenal gland, prostate, epididymis, uterus, placenta, colon and jejunum. Moderate expression in eyes, pituitary, pancreas, smooth muscle, testis and ovary. Very low levels in lung, aorta, liver, heart, skeletal muscle, thymus and spleen. In the brain, highest expression in cerebellar granule cells, brainstem, hippocampus and cerebral cortex.

The protein resides in the cell membrane. It localises to the recycling endosome. Its subcellular location is the apical cell membrane. The protein localises to the cytoplasmic vesicle. It is found in the perikaryon. The protein resides in the cell projection. It localises to the dendrite. Its subcellular location is the synaptic cell membrane. It carries out the reaction K(+)(in) = K(+)(out). The catalysed reaction is NH4(+)(in) = NH4(+)(out). It catalyses the reaction Na(+)(in) = Na(+)(out). The enzyme catalyses Rb(+)(in) = Rb(+)(out). It carries out the reaction Cs(+)(in) = Cs(+)(out). The catalysed reaction is Li(+)(in) = Li(+)(out). It catalyses the reaction L-glutamate(out) = L-glutamate(in). The enzyme catalyses chloride(in) = chloride(out). Its activity is regulated as follows. Inhibited by quinine, quinidine, barium, and internal acidification. Functionally, ion channel that contributes to passive transmembrane potassium transport and to the regulation of the resting membrane potential in brain astrocytes, but also in kidney and in other tissues. Forms dimeric channels through which potassium ions pass in accordance with their electrochemical gradient. The channel is selective for K(+) ions at physiological potassium concentrations and at neutral pH, but becomes permeable to Na(+) at subphysiological K(+) levels and upon acidification of the extracellular medium. The homodimer has very low potassium channel activity, when expressed in heterologous systems, and can function as weakly inward rectifying potassium channel. Channel activity is modulated by activation of serotonin receptors. Heterodimeric channels containing KCNK1 and KCNK2 have much higher activity, and may represent the predominant form in astrocytes. Heterodimeric channels containing KCNK1 and KCNK3 or KCNK9 have much higher activity. Heterodimeric channels formed by KCNK1 and KCNK9 may contribute to halothane-sensitive currents. Mediates outward rectifying potassium currents in dentate gyrus granule cells and contributes to the regulation of their resting membrane potential. Contributes to the regulation of action potential firing in dentate gyrus granule cells and down-regulates their intrinsic excitability. In astrocytes, the heterodimer formed by KCNK1 and KCNK2 is required for rapid glutamate release in response to activation of G-protein coupled receptors, such as F2R and CNR1. Required for normal ion and water transport in the kidney. Contributes to the regulation of the resting membrane potential of pancreatic beta cells. The low channel activity of homodimeric KCNK1 may be due to sumoylation. The low channel activity may be due to rapid internalization from the cell membrane and retention in recycling endosomes. Permeable to monovalent cations with ion selectivity for K(+) &gt; Rb(+) &gt;&gt; NH4(+) &gt;&gt; Cs(+) = Na(+) = Li(+). In Mus musculus (Mouse), this protein is Potassium channel subfamily K member 1 (Kcnk1).